We begin with the raw amino-acid sequence, 199 residues long: Crossover junction endodeoxyribonuclease RuvC (199 aa).

Active-site residues include Asp-17, Glu-76, and Asp-148. Mg(2+)-binding residues include Asp-17, Glu-76, and Asp-148.

Belongs to the RuvC family. Homodimer which binds Holliday junction (HJ) DNA. The HJ becomes 2-fold symmetrical on binding to RuvC with unstacked arms; it has a different conformation from HJ DNA in complex with RuvA. In the full resolvosome a probable DNA-RuvA(4)-RuvB(12)-RuvC(2) complex forms which resolves the HJ. Mg(2+) serves as cofactor.

The protein resides in the cytoplasm. It carries out the reaction Endonucleolytic cleavage at a junction such as a reciprocal single-stranded crossover between two homologous DNA duplexes (Holliday junction).. The RuvA-RuvB-RuvC complex processes Holliday junction (HJ) DNA during genetic recombination and DNA repair. Endonuclease that resolves HJ intermediates. Cleaves cruciform DNA by making single-stranded nicks across the HJ at symmetrical positions within the homologous arms, yielding a 5'-phosphate and a 3'-hydroxyl group; requires a central core of homology in the junction. The consensus cleavage sequence is 5'-(A/T)TT(C/G)-3'. Cleavage occurs on the 3'-side of the TT dinucleotide at the point of strand exchange. HJ branch migration catalyzed by RuvA-RuvB allows RuvC to scan DNA until it finds its consensus sequence, where it cleaves and resolves the cruciform DNA. The polypeptide is Crossover junction endodeoxyribonuclease RuvC (Mannheimia succiniciproducens (strain KCTC 0769BP / MBEL55E)).